Here is a 388-residue protein sequence, read N- to C-terminus: MEPSLATGGSETTRLVSARDRSSAGGGLRLKSLFTEPSEPLPEEPKLEGMAFHHCHKDPVPQSGLSPERVQARRQLYAACAVCFIFMAGEVVGGYLAHSLAIMTDAAHLLADIGSMLASLFSLWLSTRPATRTMTFGWHRSETLGALASVVSLWIVTGILLYLAFLRLLHSDYHIEAGAMLLTASIAVCANLLMAFVLHQTGAPHSHGSTGAEYAPLEEGHGYPMSLGNTSVRAAFVHVLGDLLQSFGVLAASILIYFKPQYKVADPISTFLFSICALGSTAPTLRDVLLVLMEGAPRSVEFEPVRDTLLSVPGVRATHDLHLWALTLTYHVASAHLAIDSTADPEAVLAEASSRLYSRFGFSSCTLQVEQYQPEMAQCLRCQEPSQA.

A disordered region spans residues 1-41; the sequence is MEPSLATGGSETTRLVSARDRSSAGGGLRLKSLFTEPSEPL. The Cytoplasmic portion of the chain corresponds to 1 to 75; the sequence is MEPSLATGGS…SPERVQARRQ (75 aa). 2 positions are modified to phosphoserine: Ser63 and Ser66. A helical membrane pass occupies residues 76 to 96; the sequence is LYAACAVCFIFMAGEVVGGYL. Residues 97–105 are Lumenal-facing; the sequence is AHSLAIMTD. Residues 106–126 form a helical membrane-spanning segment; the sequence is AAHLLADIGSMLASLFSLWLS. Residues His108 and Asp112 each contribute to the Zn(2+) site. Topologically, residues 127–145 are cytoplasmic; the sequence is TRPATRTMTFGWHRSETLG. A helical membrane pass occupies residues 146-166; that stretch reads ALASVVSLWIVTGILLYLAFL. Topologically, residues 167-177 are lumenal; it reads RLLHSDYHIEA. The helical transmembrane segment at 178 to 198 threads the bilayer; sequence GAMLLTASIAVCANLLMAFVL. Over 199–235 the chain is Cytoplasmic; sequence HQTGAPHSHGSTGAEYAPLEEGHGYPMSLGNTSVRAA. The helical transmembrane segment at 236–256 threads the bilayer; it reads FVHVLGDLLQSFGVLAASILI. Zn(2+) is bound by residues His238 and Asp242. The Lumenal portion of the chain corresponds to 257–263; that stretch reads YFKPQYK. The chain crosses the membrane as a helical span at residues 264-284; that stretch reads VADPISTFLFSICALGSTAPT. Residues 285 to 388 are Cytoplasmic-facing; sequence LRDVLLVLME…CLRCQEPSQA (104 aa).

It belongs to the cation diffusion facilitator (CDF) transporter (TC 2.A.4) family. SLC30A subfamily. As to quaternary structure, homodimer. Homodimerization is negligible compared to the human protein. It could explain the lower efficiency of zinc transport. Interacts with TMEM163. In terms of tissue distribution, expression is restricted to brain (at protein level). In the brain, most abundant in hippocampus and cerebral cortex. The mRNA is also detected in testis, expression being restricted to germ cells and highest in pachytene spermatocytes and round spermatids.

The protein resides in the cytoplasmic vesicle. Its subcellular location is the secretory vesicle. It is found in the synaptic vesicle membrane. The protein localises to the synapse. It localises to the synaptosome. The protein resides in the late endosome membrane. Its subcellular location is the lysosome membrane. The enzyme catalyses Zn(2+)(in) + 2 H(+)(out) = Zn(2+)(out) + 2 H(+)(in). Its function is as follows. Probable proton-coupled zinc ion antiporter mediating the import of zinc from cytoplasm into synaptic vesicles and participating to cellular zinc ion homeostasis in the brain. The chain is Probable proton-coupled zinc antiporter SLC30A3 from Mus musculus (Mouse).